The following is a 698-amino-acid chain: eEF1A lysine and N-terminal methyltransferase (698 aa).

M1 is subject to N-acetylmethionine. S267 carries the post-translational modification Phosphoserine. The segment at 431–461 is disordered; that stretch reads KDTSHRAQKKRKKDRKKQRPADTSEDFPPAP. Residues 436–448 show a composition bias toward basic residues; it reads RAQKKRKKDRKKQ.

The protein belongs to the methyltransferase superfamily. As to quaternary structure, forms a tripartite complex containing GAB1, METTL13 and SPRY2. Within the complex interacts with GAB1 and SPRY2. In terms of tissue distribution, expressed in the inner ear (at protein level). Expression is detected in the cochlear duct, spiral limbus region, efferent and afferent nerves, and in spiral ganglion neurons (at protein level).

The protein resides in the cytoplasm. Its subcellular location is the nucleus. It localises to the mitochondrion. The catalysed reaction is L-lysyl-[protein] + S-adenosyl-L-methionine = N(6)-methyl-L-lysyl-[protein] + S-adenosyl-L-homocysteine + H(+). It carries out the reaction N(6)-methyl-L-lysyl-[protein] + S-adenosyl-L-methionine = N(6),N(6)-dimethyl-L-lysyl-[protein] + S-adenosyl-L-homocysteine + H(+). The enzyme catalyses N-terminal glycyl-L-lysyl-L-glutamyl-[protein] + 3 S-adenosyl-L-methionine = N-terminal N,N,N-trimethyl-glycyl-L-lysyl-L-glutamyl-[protein] + 3 S-adenosyl-L-homocysteine + 3 H(+). In terms of biological role, dual methyltransferase that catalyzes methylation of elongation factor 1-alpha (EEF1A1 and EEF1A2) at two different positions, and is therefore involved in the regulation of mRNA translation. Via its C-terminus, methylates EEF1A1 and EEF1A2 at the N-terminal residue 'Gly-2'. Via its N-terminus dimethylates EEF1A1 and EEF1A2 at residue 'Lys-55'. Has no activity towards core histones H2A, H2B, H3 and H4. In Mus musculus (Mouse), this protein is eEF1A lysine and N-terminal methyltransferase.